Consider the following 394-residue polypeptide: Probable 6-phosphogluconolactonase ARB_02015 (394 aa).

The N-terminal stretch at 1-21 (MKTVPFLSLLQAGILTSGIVA) is a signal peptide. N-linked (GlcNAc...) asparagine glycosylation occurs at asparagine 51.

The protein belongs to the cycloisomerase 2 family.

It is found in the secreted. It catalyses the reaction 6-phospho-D-glucono-1,5-lactone + H2O = 6-phospho-D-gluconate + H(+). The protein operates within carbohydrate degradation; pentose phosphate pathway; D-ribulose 5-phosphate from D-glucose 6-phosphate (oxidative stage): step 2/3. Functionally, catalyzes the hydrolysis of 6-phosphogluconolactone to 6-phosphogluconate. The polypeptide is Probable 6-phosphogluconolactonase ARB_02015 (Arthroderma benhamiae (strain ATCC MYA-4681 / CBS 112371) (Trichophyton mentagrophytes)).